The chain runs to 443 residues: Tubulin beta chain (443 aa).

Residues Gln11, Glu69, Ser138, Gly142, Thr143, Gly144, Asn204, and Asn226 each coordinate GTP. Mg(2+) is bound at residue Glu69. Residues 424–443 (QYQDASAEEEGEFEGEEEEA) form a disordered region. The span at 429–443 (SAEEEGEFEGEEEEA) shows a compositional bias: acidic residues.

It belongs to the tubulin family. In terms of assembly, dimer of alpha and beta chains. A typical microtubule is a hollow water-filled tube with an outer diameter of 25 nm and an inner diameter of 15 nM. Alpha-beta heterodimers associate head-to-tail to form protofilaments running lengthwise along the microtubule wall with the beta-tubulin subunit facing the microtubule plus end conferring a structural polarity. Microtubules usually have 13 protofilaments but different protofilament numbers can be found in some organisms and specialized cells. Mg(2+) serves as cofactor.

The protein localises to the cytoplasm. It is found in the cytoskeleton. Functionally, tubulin is the major constituent of microtubules, a cylinder consisting of laterally associated linear protofilaments composed of alpha- and beta-tubulin heterodimers. Microtubules grow by the addition of GTP-tubulin dimers to the microtubule end, where a stabilizing cap forms. Below the cap, tubulin dimers are in GDP-bound state, owing to GTPase activity of alpha-tubulin. The sequence is that of Tubulin beta chain (TUBB) from Chlamydomonas incerta.